The following is a 275-amino-acid chain: Protein rolling stone (275 aa).

6 helical membrane passes run 45 to 65, 72 to 92, 127 to 147, 162 to 182, 185 to 205, and 232 to 252; these read LLYR…CVIV, FFIY…LISA, WLYN…WVFL, IITH…IAFP, ILHM…TLIY, and MVTF…LFGL.

In terms of tissue distribution, expressed in cells of the somatic mesoderm, most notably the muscle founder cells, between embryonic stages 12 and 14, in growing muscle fibers in dorsal, lateral and ventral positions. At stage 16 strongest expression is in some ventral muscles and muscle 8. At stages 16/17 expression is restricted to some cells of the CNS, the brain and the gonads.

The protein localises to the membrane. Functionally, may have a central role in the fusion process during myogenesis, within the somatic mesoderm. In Drosophila melanogaster (Fruit fly), this protein is Protein rolling stone (rost).